The chain runs to 516 residues: 2,3-bisphosphoglycerate-independent phosphoglycerate mutase (516 aa).

Aspartate 15 and serine 65 together coordinate Mn(2+). The Phosphoserine intermediate role is filled by serine 65. Substrate contacts are provided by residues histidine 126, 156 to 157 (RD), arginine 188, arginine 194, 263 to 266 (RADR), and lysine 336. Mn(2+)-binding residues include aspartate 403, histidine 407, aspartate 444, histidine 445, and histidine 463.

The protein belongs to the BPG-independent phosphoglycerate mutase family. Monomer. Mn(2+) serves as cofactor.

It catalyses the reaction (2R)-2-phosphoglycerate = (2R)-3-phosphoglycerate. It functions in the pathway carbohydrate degradation; glycolysis; pyruvate from D-glyceraldehyde 3-phosphate: step 3/5. In terms of biological role, catalyzes the interconversion of 2-phosphoglycerate and 3-phosphoglycerate. The polypeptide is 2,3-bisphosphoglycerate-independent phosphoglycerate mutase (Francisella tularensis subsp. holarctica (strain OSU18)).